Here is a 126-residue protein sequence, read N- to C-terminus: Large ribosomal subunit protein uL22 (126 aa).

It belongs to the universal ribosomal protein uL22 family. In terms of assembly, part of the 50S ribosomal subunit.

Functionally, this protein binds specifically to 23S rRNA; its binding is stimulated by other ribosomal proteins, e.g. L4, L17, and L20. It is important during the early stages of 50S assembly. It makes multiple contacts with different domains of the 23S rRNA in the assembled 50S subunit and ribosome. Its function is as follows. The globular domain of the protein is located near the polypeptide exit tunnel on the outside of the subunit, while an extended beta-hairpin is found that lines the wall of the exit tunnel in the center of the 70S ribosome. The chain is Large ribosomal subunit protein uL22 from Dinoroseobacter shibae (strain DSM 16493 / NCIMB 14021 / DFL 12).